A 111-amino-acid chain; its full sequence is Large ribosomal subunit protein uL22 (111 aa).

This sequence belongs to the universal ribosomal protein uL22 family. In terms of assembly, part of the 50S ribosomal subunit.

In terms of biological role, this protein binds specifically to 23S rRNA; its binding is stimulated by other ribosomal proteins, e.g. L4, L17, and L20. It is important during the early stages of 50S assembly. It makes multiple contacts with different domains of the 23S rRNA in the assembled 50S subunit and ribosome. Functionally, the globular domain of the protein is located near the polypeptide exit tunnel on the outside of the subunit, while an extended beta-hairpin is found that lines the wall of the exit tunnel in the center of the 70S ribosome. This Protochlamydia amoebophila (strain UWE25) protein is Large ribosomal subunit protein uL22.